Reading from the N-terminus, the 149-residue chain is Large-conductance mechanosensitive channel (149 aa).

3 helical membrane-spanning segments follow: residues 16–36, 40–60, and 89–109; these read VMDL…VNSV, LIMP…KFIL, and GSFI…FMMV.

Belongs to the MscL family. As to quaternary structure, homopentamer.

It is found in the cell inner membrane. Functionally, channel that opens in response to stretch forces in the membrane lipid bilayer. May participate in the regulation of osmotic pressure changes within the cell. The polypeptide is Large-conductance mechanosensitive channel (Paraburkholderia phymatum (strain DSM 17167 / CIP 108236 / LMG 21445 / STM815) (Burkholderia phymatum)).